Here is an 80-residue protein sequence, read N- to C-terminus: MTNNYQKPNPDDRSDNVEKLQDMVQNTIENIEEAKESMEFATDEEKQRIQEKNARRNESIESFRSEIQDESAARENGYQS.

Basic and acidic residues predominate over residues 34–73; that stretch reads AKESMEFATDEEKQRIQEKNARRNESIESFRSEIQDESAA. A disordered region spans residues 34–80; that stretch reads AKESMEFATDEEKQRIQEKNARRNESIESFRSEIQDESAARENGYQS.

The protein belongs to the Tlp family.

The protein localises to the spore core. This chain is Small, acid-soluble spore protein Tlp, found in Bacillus velezensis (strain DSM 23117 / BGSC 10A6 / LMG 26770 / FZB42) (Bacillus amyloliquefaciens subsp. plantarum).